The following is a 282-amino-acid chain: Probable endonuclease 4 (282 aa).

Positions 69, 109, 145, 179, 182, 216, 229, 231, and 261 each coordinate Zn(2+).

It belongs to the AP endonuclease 2 family. Requires Zn(2+) as cofactor.

The enzyme catalyses Endonucleolytic cleavage to 5'-phosphooligonucleotide end-products.. Functionally, endonuclease IV plays a role in DNA repair. It cleaves phosphodiester bonds at apurinic or apyrimidinic (AP) sites, generating a 3'-hydroxyl group and a 5'-terminal sugar phosphate. This is Probable endonuclease 4 from Chlorobium chlorochromatii (strain CaD3).